A 306-amino-acid polypeptide reads, in one-letter code: Homoserine kinase (306 aa).

Position 95 to 105 (95 to 105 (PHSRGLGSSAA)) interacts with ATP.

It belongs to the GHMP kinase family. Homoserine kinase subfamily.

Its subcellular location is the cytoplasm. The enzyme catalyses L-homoserine + ATP = O-phospho-L-homoserine + ADP + H(+). It participates in amino-acid biosynthesis; L-threonine biosynthesis; L-threonine from L-aspartate: step 4/5. In terms of biological role, catalyzes the ATP-dependent phosphorylation of L-homoserine to L-homoserine phosphate. The polypeptide is Homoserine kinase (Mycobacteroides abscessus (strain ATCC 19977 / DSM 44196 / CCUG 20993 / CIP 104536 / JCM 13569 / NCTC 13031 / TMC 1543 / L948) (Mycobacterium abscessus)).